Reading from the N-terminus, the 304-residue chain is Ribosomal RNA small subunit methyltransferase H (304 aa).

S-adenosyl-L-methionine contacts are provided by residues 37 to 39 (AGH), D57, F79, D100, and H107.

It belongs to the methyltransferase superfamily. RsmH family.

It is found in the cytoplasm. The catalysed reaction is cytidine(1402) in 16S rRNA + S-adenosyl-L-methionine = N(4)-methylcytidine(1402) in 16S rRNA + S-adenosyl-L-homocysteine + H(+). Specifically methylates the N4 position of cytidine in position 1402 (C1402) of 16S rRNA. In Bacteroides thetaiotaomicron (strain ATCC 29148 / DSM 2079 / JCM 5827 / CCUG 10774 / NCTC 10582 / VPI-5482 / E50), this protein is Ribosomal RNA small subunit methyltransferase H.